Consider the following 601-residue polypeptide: Keratin, type II cytoskeletal 5 (601 aa).

The tract at residues 1–168 (MSRQSTVSFR…DPTIQRVRTE (168 aa)) is head. Phosphoserine occurs at positions 5, 8, 16, and 21. A Phosphothreonine; by CDK1 modification is found at Thr-24. Ser-26, Ser-36, Ser-50, Ser-64, Ser-71, and Ser-75 each carry phosphoserine. Thr-152 carries the post-translational modification Phosphothreonine; by CDK1. Residue Thr-167 is modified to Phosphothreonine; by AURKB. The tract at residues 169–204 (EREQIKTLNNKFASFIDKVRFLEQQNKVLDTKWALL) is coil 1A. The region spanning 169 to 482 (EREQIKTLNN…KLLEGEECRL (314 aa)) is the IF rod domain. The interval 205-223 (QEQGTKTVRQNLEPLLEQY) is linker 1. The tract at residues 224–316 (INNLRRQLDG…FFDAELSQMQ (93 aa)) is coil 1B. The tract at residues 317–339 (THVSDTSVVLSMDNNRSLDLDSI) is linker 12. Residues 340 to 478 (IAEVKAQYED…ATYRKLLEGE (139 aa)) form a coil 2 region. Positions 479–601 (ECRLSGEGVG…TSSSRKSFKS (123 aa)) are tail. The tract at residues 576–601 (FGSGGGSSSSVKFVSTTSSSRKSFKS) is disordered. Residues 583–601 (SSSVKFVSTTSSSRKSFKS) show a composition bias toward low complexity.

Belongs to the intermediate filament family. As to quaternary structure, heterodimer of a type I and a type II keratin. Heterodimer with type I keratin KRT25 leading to the formation of keratin intermediate filament (KIF) network. Forms a heterodimer (via 2B domains) with KRT14 (via 2B domains). Interacts with TCHP. Interacts with EPPK1. Interacts with AMELX. Interacts with PKP1 (via N-terminus) and PKP2. Phosphorylated by CDK1, AURKB and Rho-kinase, phosphorylation is regulated by the cell cycle. Thr-24 phosphorylation, mediated by CDK1, peaks during prometaphase or metaphase cells with phosphorylated filamentous structures evident throughout the cytoplasm early mitosis. CDK1 phosphorylates Thr-24 in mitotic cells at the site of injury. Post-translationally, O-glycosylated.

The protein resides in the cytoplasm. In terms of biological role, required for the formation of keratin intermediate filaments in the basal epidermis and maintenance of the skin barrier in response to mechanical stress. Regulates the recruitment of Langerhans cells to the epidermis, potentially by modulation of the abundance of macrophage chemotactic cytokines, macrophage inflammatory cytokines and CTNND1 localization in keratinocytes. This chain is Keratin, type II cytoskeletal 5, found in Bos taurus (Bovine).